We begin with the raw amino-acid sequence, 213 residues long: Heat shock protein 30C (213 aa).

Residues 61-80 show a composition bias toward basic and acidic residues; that stretch reads SKDTEMRRITDQNRQSRESE. Disordered regions lie at residues 61–93 and 174–213; these read SKDT…GKDH and ALPP…QKVD. One can recognise a sHSP domain in the interval 76-188; sequence SRESEGTSPN…PETPIPISMD (113 aa).

It belongs to the small heat shock protein (HSP20) family.

The protein is Heat shock protein 30C (hsp30c) of Xenopus laevis (African clawed frog).